Consider the following 312-residue polypeptide: Mevalonate kinase (312 aa).

ATP is bound at residue 104 to 114 (PISCGLGSSAS). Asp155 acts as the Proton acceptor in catalysis.

It belongs to the GHMP kinase family. Mevalonate kinase subfamily. As to quaternary structure, homodimer. Mg(2+) is required as a cofactor.

Its subcellular location is the cytoplasm. The enzyme catalyses (R)-mevalonate + ATP = (R)-5-phosphomevalonate + ADP + H(+). It participates in isoprenoid biosynthesis; isopentenyl diphosphate biosynthesis via mevalonate pathway; isopentenyl diphosphate from (R)-mevalonate: step 1/3. Farnesyl- and geranyl-pyrophosphates are competitive inhibitors. Slightly inhibited by high concentration of ATP. Functionally, catalyzes the phosphorylation of (R)-mevalonate (MVA) to (R)-mevalonate 5-phosphate (MVAP). Functions in the mevalonate (MVA) pathway leading to isopentenyl diphosphate (IPP), a key precursor for the biosynthesis of isoprenoid compounds such as archaeal membrane lipids. The sequence is that of Mevalonate kinase from Methanocaldococcus jannaschii (strain ATCC 43067 / DSM 2661 / JAL-1 / JCM 10045 / NBRC 100440) (Methanococcus jannaschii).